Consider the following 170-residue polypeptide: Protein SprT (170 aa).

One can recognise a SprT-like domain in the interval 23-164; the sequence is QLARQHFSVE…CRQCGDKLKF (142 aa). Position 78 (H78) interacts with Zn(2+). Residue E79 is part of the active site. H82 serves as a coordination point for Zn(2+).

Belongs to the SprT family. The cofactor is Zn(2+).

Its subcellular location is the cytoplasm. The protein is Protein SprT of Serratia proteamaculans (strain 568).